Here is a 206-residue protein sequence, read N- to C-terminus: LexA repressor (206 aa).

A DNA-binding region (H-T-H motif) is located at residues 28-48 (VREICAAVGLSSTSTVHGHLT). Active-site for autocatalytic cleavage activity residues include Ser127 and Lys165.

The protein belongs to the peptidase S24 family. Homodimer.

The catalysed reaction is Hydrolysis of Ala-|-Gly bond in repressor LexA.. In terms of biological role, represses a number of genes involved in the response to DNA damage (SOS response), including recA and lexA. In the presence of single-stranded DNA, RecA interacts with LexA causing an autocatalytic cleavage which disrupts the DNA-binding part of LexA, leading to derepression of the SOS regulon and eventually DNA repair. In Lactobacillus delbrueckii subsp. bulgaricus (strain ATCC 11842 / DSM 20081 / BCRC 10696 / JCM 1002 / NBRC 13953 / NCIMB 11778 / NCTC 12712 / WDCM 00102 / Lb 14), this protein is LexA repressor.